The chain runs to 539 residues: MSFKSIFLTGGVVSSLGKGLTAASLALLLERQDLKVAMLKLDPYLNVDPGTMNPYEHGEVYVTDDGVETDLDLGHYHRFSSVQLSKYSTATSGQIYTKVLTKERNGEFLGSTVQVIPHVTNEIINVIQSCADHHKPDILIVEIGGTIGDIESLPFLEAVRQFRCEHPQDCLSIHMTYVPYLRAAKEIKTKPTQHSVQNLRSIGISPDVILCRSEAPLSTEVKRKISLFCNVPEHAVFNAIDLERSIYEMPLLLAKENISDFLLNKLGFSPKPLDLSDWQDLVEALCDKERQHVRIGLVGKYLEHKDAYKSVFESLFHASVPANCSLELVPIAPESEDLLEQLSQCDGCLIPGGFGTRSWEGKISAARYCRERNIPCFGICLGMQALVVEYARNVLDKPLANSMEINPETPDPVVCMMEGQDSVVKGGTMRLGAYPCRIAPGSLASAAYKTDLVQERHRHRYEVNPSYIERLEEHGLKIAGVCPLGELCEIVEIPNHRWMLGVQFHPEFLSKLAKPHPLFIEFIRAAKAYSLEKANHEHR.

Positions 1–268 (MSFKSIFLTG…SDFLLNKLGF (268 aa)) are amidoligase domain. CTP is bound at residue serine 14. Serine 14 serves as a coordination point for UTP. 15–20 (SLGKGL) lines the ATP pocket. An L-glutamine-binding site is contributed by tyrosine 55. Aspartate 72 is a binding site for ATP. Mg(2+)-binding residues include aspartate 72 and glutamate 142. CTP-binding positions include 149 to 151 (DIE), 188 to 193 (KTKPTQ), and lysine 224. UTP-binding positions include 188–193 (KTKPTQ) and lysine 224. Leucine 242 is an ATP binding site. Positions 294–532 (RIGLVGKYLE…IRAAKAYSLE (239 aa)) constitute a Glutamine amidotransferase type-1 domain. Glycine 353 lines the L-glutamine pocket. Residue cysteine 380 is the Nucleophile; for glutamine hydrolysis of the active site. Residues 381–384 (LGMQ), glutamate 404, and arginine 460 each bind L-glutamine. Active-site residues include histidine 505 and glutamate 507.

It belongs to the CTP synthase family. Homotetramer.

It catalyses the reaction UTP + L-glutamine + ATP + H2O = CTP + L-glutamate + ADP + phosphate + 2 H(+). The catalysed reaction is L-glutamine + H2O = L-glutamate + NH4(+). The enzyme catalyses UTP + NH4(+) + ATP = CTP + ADP + phosphate + 2 H(+). Its pathway is pyrimidine metabolism; CTP biosynthesis via de novo pathway; CTP from UDP: step 2/2. With respect to regulation, allosterically activated by GTP, when glutamine is the substrate; GTP has no effect on the reaction when ammonia is the substrate. The allosteric effector GTP functions by stabilizing the protein conformation that binds the tetrahedral intermediate(s) formed during glutamine hydrolysis. Inhibited by the product CTP, via allosteric rather than competitive inhibition. In terms of biological role, catalyzes the ATP-dependent amination of UTP to CTP with either L-glutamine or ammonia as the source of nitrogen. May be involved in lipopolysaccharide biosynthesis, potentially channelling CTP directly to CMP-KDO synthetase. Regulates intracellular CTP levels through interactions with the four ribonucleotide triphosphates. The protein is CTP synthase of Chlamydia trachomatis serovar D (strain ATCC VR-885 / DSM 19411 / UW-3/Cx).